A 597-amino-acid polypeptide reads, in one-letter code: Elongation factor 4 (597 aa).

One can recognise a tr-type G domain in the interval 2–184; that stretch reads DHIRNFSIIA…SLIAKVPPPK (183 aa). GTP is bound by residues 14-19 and 131-134; these read DHGKST and NKID.

Belongs to the TRAFAC class translation factor GTPase superfamily. Classic translation factor GTPase family. LepA subfamily.

It is found in the cell inner membrane. It catalyses the reaction GTP + H2O = GDP + phosphate + H(+). Functionally, required for accurate and efficient protein synthesis under certain stress conditions. May act as a fidelity factor of the translation reaction, by catalyzing a one-codon backward translocation of tRNAs on improperly translocated ribosomes. Back-translocation proceeds from a post-translocation (POST) complex to a pre-translocation (PRE) complex, thus giving elongation factor G a second chance to translocate the tRNAs correctly. Binds to ribosomes in a GTP-dependent manner. The polypeptide is Elongation factor 4 (Burkholderia lata (strain ATCC 17760 / DSM 23089 / LMG 22485 / NCIMB 9086 / R18194 / 383)).